Consider the following 280-residue polypeptide: MSALILDGKALAQKTEAELSERVAALKSKTGRTPILATILVGGDPASATYVRMKGNACTRIGMDSMKVELPETTTTDELLAKIAELNNNPDVHGILLQHPVPSQIDERACFDAIDLSKDVDGVTCLGFGRMAMGEEAYGCATPKGIMRLLEAYEIPLEGKHAVVVGRSPILGKPMALMLLNANATVTICHSRTKDLQSHIATADIVVGAVGIPEFIKADWIKPGAVVVDAGYHPGGVGDIELGPLADKASALTPVPGGVGPMTINTLIYQSVDSGEKKLA.

NADP(+) is bound by residues 166–168 and serine 191; that span reads GRS.

This sequence belongs to the tetrahydrofolate dehydrogenase/cyclohydrolase family. In terms of assembly, homodimer.

It catalyses the reaction (6R)-5,10-methylene-5,6,7,8-tetrahydrofolate + NADP(+) = (6R)-5,10-methenyltetrahydrofolate + NADPH. The catalysed reaction is (6R)-5,10-methenyltetrahydrofolate + H2O = (6R)-10-formyltetrahydrofolate + H(+). Its pathway is one-carbon metabolism; tetrahydrofolate interconversion. In terms of biological role, catalyzes the oxidation of 5,10-methylenetetrahydrofolate to 5,10-methenyltetrahydrofolate and then the hydrolysis of 5,10-methenyltetrahydrofolate to 10-formyltetrahydrofolate. The polypeptide is Bifunctional protein FolD (Teredinibacter turnerae (strain ATCC 39867 / T7901)).